An 81-amino-acid polypeptide reads, in one-letter code: Conotoxin Im6.1 (81 aa).

An N-terminal signal peptide occupies residues 1 to 20; sequence MSKLGVVLFTLLLLVPLVTP. The propeptide occupies 21-47; the sequence is ERDGGKWTMLAKNKKAMKRNLMDFITR. Intrachain disulfides connect cysteine 49/cysteine 61, cysteine 54/cysteine 67, and cysteine 60/cysteine 76.

It belongs to the conotoxin M superfamily. In terms of tissue distribution, expressed by the venom duct.

It is found in the secreted. The chain is Conotoxin Im6.1 from Conus imperialis (Imperial cone).